The following is a 355-amino-acid chain: MQVEVDLPNHSYHIKIEEGCFSEAGDWVSHLWQKQMITIITDSNVEILYGESLVNQLKKQGFTVHVFSFAAGEASKTLEVANRIYGFLAKHHMTRSDGIIALGGGVVGDLAAFVASTYMRGIHFLQIPTSLTAQVDSSIGGKTGVNTSFAKNMVGTFAQPDGVLIDPVTLKTLGNRELVEGMGEVIKYGLIDDIKLWHILEEMDGSIDSILDNALAIIYHSCQVKRKHVLADQYDKGLRMHLNFGHTIGHAIEVHAGYGEIMHGEAVAIGMIQLSRVAERKNLMPRGISQDIYNMCLKFGLPVHYAEWDKDVLFDILSHDKKASGQFIKIVILPQLGSATVHQIPLEEMRDYLEK.

NAD(+) contacts are provided by residues 105-109 (GVVGD), 129-130 (TS), K142, K151, and 169-172 (TLKT). Residues E184, H246, and H263 each contribute to the Zn(2+) site.

Belongs to the sugar phosphate cyclases superfamily. Dehydroquinate synthase family. Requires Co(2+) as cofactor. Zn(2+) serves as cofactor. NAD(+) is required as a cofactor.

The protein localises to the cytoplasm. It carries out the reaction 7-phospho-2-dehydro-3-deoxy-D-arabino-heptonate = 3-dehydroquinate + phosphate. Its pathway is metabolic intermediate biosynthesis; chorismate biosynthesis; chorismate from D-erythrose 4-phosphate and phosphoenolpyruvate: step 2/7. Its function is as follows. Catalyzes the conversion of 3-deoxy-D-arabino-heptulosonate 7-phosphate (DAHP) to dehydroquinate (DHQ). In Streptococcus agalactiae serotype Ia (strain ATCC 27591 / A909 / CDC SS700), this protein is 3-dehydroquinate synthase.